A 470-amino-acid chain; its full sequence is GDP-Man:Man(3)GlcNAc(2)-PP-Dol alpha-1,2-mannosyltransferase (470 aa).

Topologically, residues 1 to 15 (MSDTVISLISHSITT) are lumenal. Residues 16-36 (VFYLVPLIIALIIPFSLYSGF) form a helical membrane-spanning segment. Residues 37-131 (RRKSKTVAFF…HYKHCTMLFQ (95 aa)) are Cytoplasmic-facing. Positions 132 to 152 (ALAGLILALEAWFRMVPAVFI) form an intramembrane region, helical. Residues 153–378 (DSMGYPLSLP…ISIHTMHNEH (226 aa)) are Cytoplasmic-facing. An intramembrane region (helical) is located at residues 379–399 (FGISVVEAMAASTIILSNDSG). Residues 400–470 (GPRMDIVKDY…HWNKEIEKVL (71 aa)) lie on the Cytoplasmic side of the membrane.

It belongs to the glycosyltransferase group 1 family. Glycosyltransferase 4 subfamily.

The protein resides in the endoplasmic reticulum membrane. It carries out the reaction an alpha-D-Man-(1-&gt;3)-[alpha-D-Man-(1-&gt;6)]-beta-D-Man-(1-&gt;4)-beta-D-GlcNAc-(1-&gt;4)-alpha-D-GlcNAc-diphospho-di-trans,poly-cis-dolichol + 2 GDP-alpha-D-mannose = an alpha-D-Man-(1-&gt;2)-alpha-D-Man-(1-&gt;2)-alpha-D-Man-(1-&gt;3)-[alpha-D-Man-(1-&gt;6)]-beta-D-Man-(1-&gt;4)-beta-D-GlcNAc-(1-&gt;4)-alpha-D-GlcNAc-diphospho-di-trans,poly-cis-dolichol + 2 GDP + 2 H(+). Its pathway is protein modification; protein glycosylation. Functionally, GDP-Man:Man(3)GlcNAc(2)-PP-Dol alpha-1,2-mannosyltransferase that operates in the biosynthetic pathway of dolichol-linked oligosaccharides, the glycan precursors employed in protein asparagine (N)-glycosylation. The assembly of dolichol-linked oligosaccharides begins on the cytosolic side of the endoplasmic reticulum membrane and finishes in its lumen. The sequential addition of sugars to dolichol pyrophosphate produces dolichol-linked oligosaccharides containing fourteen sugars, including two GlcNAcs, nine mannoses and three glucoses. Once assembled, the oligosaccharide is transferred from the lipid to nascent proteins by oligosaccharyltransferases. Catalyzes, on the cytoplasmic face of the endoplasmic reticulum, the addition of the fourth and fifth mannose residues to the dolichol-linked oligosaccharide chain, to produce Man(5)GlcNAc(2)-PP-dolichol core oligosaccharide. Man(5)GlcNAc(2)-PP-dolichol is a substrate for ALG3, the following enzyme in the biosynthetic pathway. This is GDP-Man:Man(3)GlcNAc(2)-PP-Dol alpha-1,2-mannosyltransferase from Caenorhabditis elegans.